We begin with the raw amino-acid sequence, 256 residues long: Coiled-coil domain-containing protein 90B, mitochondrial (256 aa).

A mitochondrion-targeting transit peptide spans 1 to 42; sequence MRSRWIWRFLRPDGGGIRWTSTPHGRLSPALRRGFLTTTTKS. A coiled-coil region spans residues 129 to 167; that stretch reads LEKSEFANLRAENEKMKIELDQVKQQLTNETSRIRADNK. Residues 231-253 form a helical membrane-spanning segment; that stretch reads TIRYLAASVFTCLAIALGFYRFW.

Belongs to the CCDC90 family. In terms of assembly, interacts with MCU.

It localises to the mitochondrion membrane. The sequence is that of Coiled-coil domain-containing protein 90B, mitochondrial (Ccdc90b) from Mus musculus (Mouse).